The following is a 74-amino-acid chain: MKKERTESLVAQALKNIGNDRYKLDNLVFARVKQLNAGAKTLVNMDPKRHKLVDIAIREIAEGKIDIDRIDERN.

This sequence belongs to the RNA polymerase subunit omega family. As to quaternary structure, the RNAP catalytic core consists of 2 alpha, 1 beta, 1 beta' and 1 omega subunit. When a sigma factor is associated with the core the holoenzyme is formed, which can initiate transcription.

The enzyme catalyses RNA(n) + a ribonucleoside 5'-triphosphate = RNA(n+1) + diphosphate. In terms of biological role, promotes RNA polymerase assembly. Latches the N- and C-terminal regions of the beta' subunit thereby facilitating its interaction with the beta and alpha subunits. This chain is DNA-directed RNA polymerase subunit omega, found in Helicobacter pylori (strain P12).